Consider the following 431-residue polypeptide: uncharacterized protein (431 aa).

Positions 1–258 (MPSQMREAIT…HGLIDLERAG (258 aa)) constitute a Peptidase S8 domain.

This sequence belongs to the peptidase S8 family.

This is an uncharacterized protein from Sinorhizobium fredii (strain NBRC 101917 / NGR234).